A 359-amino-acid polypeptide reads, in one-letter code: Cell division protein ZipA (359 aa).

The Periplasmic portion of the chain corresponds to 1–4 (MDLN). Residues 5–25 (TILIILGILALVALVAHGLWS) traverse the membrane as a helical segment. At 26–359 (NRREKSQYFE…AEEEYLAKIK (334 aa)) the chain is on the cytoplasmic side. Positions 78–101 (PPVQQPLNTEPEPITQETPVRAEP) are disordered.

Belongs to the ZipA family. In terms of assembly, interacts with FtsZ via their C-terminal domains.

It localises to the cell inner membrane. In terms of biological role, essential cell division protein that stabilizes the FtsZ protofilaments by cross-linking them and that serves as a cytoplasmic membrane anchor for the Z ring. Also required for the recruitment to the septal ring of downstream cell division proteins. This is Cell division protein ZipA from Mannheimia succiniciproducens (strain KCTC 0769BP / MBEL55E).